The primary structure comprises 574 residues: MSSGIILLIVAIVLLVIIAYLVGVIIRKRNDSLITSLEERKQALFALPVNDEIEEVKSLHLIGQSQTSFREWNQKWVDLTVNSFADIENHIFEAENLNDTFNFIRAKHEINSVESQLNLVEEDIASIREALNILKEQEEKNSARVTHALDLYEKLQASISENEDNFGSTMPEIDKQMKNIETEFSQFVALNSSGDPVEASEVLDRAEEHTIALGQITEQIPAIVAKLEDDFPDQLDDLETGYRRLLEENYHFPEKNIEARFQEIRESIRANSSELVTLDLDRAREENTHIQERIDSLYEVFEREIAAYKVAAKNSKMLPRYLAHVKRNNEQLKNEIARLSRKYILSETESLTVKAFEKDIKEIEDSTLAVAEQFGLQEKPFSELQVTFERSIKTLTNVESGQMDVFAAVKDIEKIESQARHNLDVYVTQLHMIKRYMEKRHLPGIPQDFLSAFFTTSSQLEALMDELSRGRINIEAVSRLSEVATVAIANLEDLTYQVVQNATLTEQLLQYSNRYRSFEAGVQSSFEHALRLFEVENDYQASFDEISYALETVEPGVTDRFVNSYEKTREHIRF.

Topologically, residues 1 to 7 (MSSGIIL) are extracellular. The chain crosses the membrane as a helical span at residues 8–26 (LIVAIVLLVIIAYLVGVII). Residues 27–574 (RKRNDSLITS…YEKTREHIRF (548 aa)) are Cytoplasmic-facing. 3 coiled-coil regions span residues 102 to 141 (NFIR…EEKN), 274 to 350 (ELVT…ETES), and 459 to 520 (QLEA…SFEA).

It belongs to the EzrA family.

The protein resides in the cell membrane. Functionally, negative regulator of FtsZ ring formation; modulates the frequency and position of FtsZ ring formation. Inhibits FtsZ ring formation at polar sites. Interacts either with FtsZ or with one of its binding partners to promote depolymerization. This Streptococcus pyogenes serotype M6 (strain ATCC BAA-946 / MGAS10394) protein is Septation ring formation regulator EzrA.